A 1497-amino-acid polypeptide reads, in one-letter code: Collagen alpha-1(XVII) chain (1497 aa).

Disordered stretches follow at residues 1–154 (MDVT…PSTR) and 167–186 (GSRS…LPIP). Residues 1–467 (MDVTKKNKRD…CGSCCSWWKW (467 aa)) lie on the Cytoplasmic side of the membrane. A nonhelical region (NC16) region spans residues 1-566 (MDVTKKNKRD…MMEQENGNLR (566 aa)). The segment covering 9–19 (RDGTEVTERIV) has biased composition (basic and acidic residues). 2 stretches are compositionally biased toward polar residues: residues 57–96 (LTHG…SPGS) and 169–183 (RSAS…SNTL). Residues 145–230 (RLQSASPSTR…WSSTLPAGSS (86 aa)) are necessary for interaction with DST and for the recruitment of DST to hemidesmosome. A helical; Signal-anchor for type II membrane protein transmembrane segment spans residues 468–488 (LLGLLLTWLLLLGLLFGLIAL). Topologically, residues 489–1497 (AEEVRKLKAR…RRRRSIAVKP (1009 aa)) are extracellular. Ser-544 is subject to Phosphoserine; by CK2. 3 disordered regions span residues 562–1011 (NGNL…SSSG), 1209–1234 (GLSF…VSGA), and 1261–1316 (SFIV…TGGG). Residues 567 to 1482 (GSPGPKGDMG…KGEKGDKGDQ (916 aa)) form a triple-helical region region. Over residues 590 to 602 (PGIPGPLGHPGPQ) the composition is skewed to pro residues. Low complexity-rich tracts occupy residues 604 to 635 (PKGQ…RGEA), 661 to 673 (PGSV…SGSP), 735 to 748 (EPGA…AGPD), and 774 to 796 (DPGK…PGRP). Pro residues-rich tracts occupy residues 820-841 (PGPP…PGPA), 858-881 (PPGP…PRGP), and 907-916 (PPGPPGPPGP). Low complexity-rich tracts occupy residues 936-946 (GFSTSGSSSFG) and 968-987 (PGVP…GSSS). Composition is skewed to pro residues over residues 994–1004 (PPGPPGPPGPP), 1214–1228 (PGPP…PRGP), and 1266–1275 (PPGPPGPQGP). The span at 1289-1312 (SRGSSSSSHSSSVRRGSSYSSSMS) shows a compositional bias: low complexity. Asn-1421 carries an N-linked (GlcNAc...) asparagine glycan. A disordered region spans residues 1434–1497 (GAIQGPPGQK…RRRRSIAVKP (64 aa)). Pro residues predominate over residues 1458 to 1469 (AGPPGHPGPPGP). Over residues 1472 to 1481 (HKGEKGDKGD) the composition is skewed to basic and acidic residues. Residues 1483–1497 (VYAGRRRRRSIAVKP) form a nonhelical region (NC1) region. Basic residues predominate over residues 1486–1497 (GRRRRRSIAVKP).

In terms of assembly, homotrimers of alpha 1(XVII)chains. Interacts (via cytoplasmic region) with ITGB4 (via cytoplasmic region). Interacts (via cytoplasmic region) with DST isoform 3 (via N-terminus). Interacts (via N-terminus) with PLEC. Interacts (via cytoplasmic region) with DSP. The intracellular/endo domain is disulfide-linked. In terms of processing, prolines at the third position of the tripeptide repeating unit (G-X-Y) are hydroxylated in some or all of the chains. Post-translationally, the ectodomain is shedded from the surface of keratinocytes resulting in a 120-kDa soluble form, also named as 120 kDa linear IgA disease antigen. The shedding is mediated by membrane-bound metalloproteases. This cleavage is inhibited by phosphorylation at Ser-544. In terms of tissue distribution, detected in skin. In the cornea, it is detected in the epithelial basement membrane, the epithelial cells, and at a lower level in stromal cells (at protein level). Stratified squamous epithelia. Found in hemidesmosomes. Expressed in cornea, oral mucosa, esophagus, intestine, kidney collecting ducts, ureter, bladder, urethra and thymus but is absent in lung, blood vessels, skeletal muscle and nerves.

Its subcellular location is the cell junction. It is found in the hemidesmosome. It localises to the membrane. The protein localises to the secreted. The protein resides in the extracellular space. Its subcellular location is the extracellular matrix. It is found in the basement membrane. May play a role in the integrity of hemidesmosome and the attachment of basal keratinocytes to the underlying basement membrane. Its function is as follows. The 120 kDa linear IgA disease antigen is an anchoring filament component involved in dermal-epidermal cohesion. Is the target of linear IgA bullous dermatosis autoantibodies. The sequence is that of Collagen alpha-1(XVII) chain (COL17A1) from Homo sapiens (Human).